The following is a 221-amino-acid chain: Deoxyribose-phosphate aldolase (221 aa).

Asp90 functions as the Proton donor/acceptor in the catalytic mechanism. Lys152 serves as the catalytic Schiff-base intermediate with acetaldehyde. Lys181 acts as the Proton donor/acceptor in catalysis.

The protein belongs to the DeoC/FbaB aldolase family. DeoC type 1 subfamily.

The protein localises to the cytoplasm. It catalyses the reaction 2-deoxy-D-ribose 5-phosphate = D-glyceraldehyde 3-phosphate + acetaldehyde. It functions in the pathway carbohydrate degradation; 2-deoxy-D-ribose 1-phosphate degradation; D-glyceraldehyde 3-phosphate and acetaldehyde from 2-deoxy-alpha-D-ribose 1-phosphate: step 2/2. Catalyzes a reversible aldol reaction between acetaldehyde and D-glyceraldehyde 3-phosphate to generate 2-deoxy-D-ribose 5-phosphate. This is Deoxyribose-phosphate aldolase from Exiguobacterium sibiricum (strain DSM 17290 / CCUG 55495 / CIP 109462 / JCM 13490 / 255-15).